Reading from the N-terminus, the 293-residue chain is Large ribosomal subunit protein uL4c (293 aa).

The transit peptide at 1 to 50 directs the protein to the chloroplast; it reads MATSTSSSLSLSFFSSSLFSSKSRNFSSKPILKLPSSSHSQTSLSLSIKS. Disordered regions lie at residues 107–138 and 259–293; these read EVRGGGRKPYPQKKTGRARRGSQGSPLRPGGG and YGVDTLEDEDEEEEEEEEGEEVDDGVEDGTPEPAE. Residues 116 to 126 show a composition bias toward basic residues; that stretch reads YPQKKTGRARR. A compositionally biased stretch (acidic residues) spans 263–293; that stretch reads TLEDEDEEEEEEEEGEEVDDGVEDGTPEPAE.

It belongs to the universal ribosomal protein uL4 family. Component of the chloroplast large ribosomal subunit (LSU). Mature 70S chloroplast ribosomes of higher plants consist of a small (30S) and a large (50S) subunit. The 30S small subunit contains 1 molecule of ribosomal RNA (16S rRNA) and 24 different proteins. The 50S large subunit contains 3 rRNA molecules (23S, 5S and 4.5S rRNA) and 33 different proteins. As to expression, highly expressed in cotyledon and weakly in roots.

The protein localises to the plastid. Its subcellular location is the chloroplast. In terms of biological role, component of the chloroplast ribosome (chloro-ribosome), a dedicated translation machinery responsible for the synthesis of chloroplast genome-encoded proteins, including proteins of the transcription and translation machinery and components of the photosynthetic apparatus. This is Large ribosomal subunit protein uL4c (RPL4) from Spinacia oleracea (Spinach).